We begin with the raw amino-acid sequence, 61 residues long: LECHNQQSSQAPTTKTCSGETNCYKKWWSDHRGTIIERGCGCPKVKPGVKLNCCRTDRCNN.

4 disulfides stabilise this stretch: Cys3-Cys23, Cys17-Cys40, Cys42-Cys53, and Cys54-Cys59.

This sequence belongs to the three-finger toxin family. Short-chain subfamily. Type I alpha-neurotoxin sub-subfamily. Expressed by the venom gland.

It localises to the secreted. Functionally, binds to muscle nicotinic acetylcholine receptor (nAChR) and inhibit acetylcholine from binding to the receptor, thereby impairing neuromuscular transmission. The chain is Short neurotoxin 1 from Naja philippinensis (Philippine cobra).